A 168-amino-acid polypeptide reads, in one-letter code: Protein-export protein SecB (168 aa).

This sequence belongs to the SecB family. Homotetramer, a dimer of dimers. One homotetramer interacts with 1 SecA dimer.

The protein localises to the cytoplasm. Functionally, one of the proteins required for the normal export of preproteins out of the cell cytoplasm. It is a molecular chaperone that binds to a subset of precursor proteins, maintaining them in a translocation-competent state. It also specifically binds to its receptor SecA. This is Protein-export protein SecB from Thioalkalivibrio sulfidiphilus (strain HL-EbGR7).